Consider the following 340-residue polypeptide: Dihydroorotate dehydrogenase (quinone) (340 aa).

FMN is bound by residues 62–66 (AGLDK) and Thr-86. Substrate is bound at residue Lys-66. 111 to 115 (NRMGF) provides a ligand contact to substrate. The FMN site is built by Asn-139 and Asn-172. Substrate is bound at residue Asn-172. Ser-175 serves as the catalytic Nucleophile. Asn-177 is a binding site for substrate. 2 residues coordinate FMN: Lys-217 and Thr-245. Residue 246-247 (NT) participates in substrate binding. FMN-binding positions include Gly-268, Gly-297, and 318–319 (YS).

It belongs to the dihydroorotate dehydrogenase family. Type 2 subfamily. As to quaternary structure, monomer. FMN serves as cofactor.

The protein resides in the cell membrane. The enzyme catalyses (S)-dihydroorotate + a quinone = orotate + a quinol. The protein operates within pyrimidine metabolism; UMP biosynthesis via de novo pathway; orotate from (S)-dihydroorotate (quinone route): step 1/1. In terms of biological role, catalyzes the conversion of dihydroorotate to orotate with quinone as electron acceptor. The polypeptide is Dihydroorotate dehydrogenase (quinone) (Alkalilimnicola ehrlichii (strain ATCC BAA-1101 / DSM 17681 / MLHE-1)).